Consider the following 354-residue polypeptide: Uroporphyrinogen decarboxylase (354 aa).

Substrate contacts are provided by residues 27-31 (RQAGR), D77, Y154, S209, and H327.

It belongs to the uroporphyrinogen decarboxylase family. In terms of assembly, homodimer.

It is found in the cytoplasm. It carries out the reaction uroporphyrinogen III + 4 H(+) = coproporphyrinogen III + 4 CO2. It participates in porphyrin-containing compound metabolism; protoporphyrin-IX biosynthesis; coproporphyrinogen-III from 5-aminolevulinate: step 4/4. Catalyzes the decarboxylation of four acetate groups of uroporphyrinogen-III to yield coproporphyrinogen-III. This is Uroporphyrinogen decarboxylase from Saccharophagus degradans (strain 2-40 / ATCC 43961 / DSM 17024).